Reading from the N-terminus, the 186-residue chain is MTDCSRCAGTNTSGPNHWPERIRDIVDFPKPGIVFKDITPLLSDGPDFASALDEMAQPWRTTPLDAVLGIEARGFILGAALARELRTGFVPVRKPGKLPGRTLIQEYALEYGTDRIEMHEDALPRGARVLIVDDVLATGGTLRAALGLAAQLELEVVGAAVLVELQGLQGRQKWANDVPLLATLSY.

The protein belongs to the purine/pyrimidine phosphoribosyltransferase family. In terms of assembly, homodimer.

It is found in the cytoplasm. It catalyses the reaction AMP + diphosphate = 5-phospho-alpha-D-ribose 1-diphosphate + adenine. It functions in the pathway purine metabolism; AMP biosynthesis via salvage pathway; AMP from adenine: step 1/1. Functionally, catalyzes a salvage reaction resulting in the formation of AMP, that is energically less costly than de novo synthesis. The sequence is that of Adenine phosphoribosyltransferase from Xanthomonas axonopodis pv. citri (strain 306).